The following is a 282-amino-acid chain: Bifunctional protein FolD (282 aa).

NADP(+) is bound by residues 166 to 168 (GAS) and isoleucine 232.

This sequence belongs to the tetrahydrofolate dehydrogenase/cyclohydrolase family. As to quaternary structure, homodimer.

The catalysed reaction is (6R)-5,10-methylene-5,6,7,8-tetrahydrofolate + NADP(+) = (6R)-5,10-methenyltetrahydrofolate + NADPH. The enzyme catalyses (6R)-5,10-methenyltetrahydrofolate + H2O = (6R)-10-formyltetrahydrofolate + H(+). It participates in one-carbon metabolism; tetrahydrofolate interconversion. Its function is as follows. Catalyzes the oxidation of 5,10-methylenetetrahydrofolate to 5,10-methenyltetrahydrofolate and then the hydrolysis of 5,10-methenyltetrahydrofolate to 10-formyltetrahydrofolate. This is Bifunctional protein FolD from Haemophilus influenzae (strain PittGG).